The chain runs to 648 residues: Chaperone protein HtpG (648 aa).

Residues 1 to 349 are a; substrate-binding; that stretch reads MTTEHAAGAQ…SSDLPLNVSR (349 aa). The tract at residues 350 to 570 is b; that stretch reads EILQESKDID…EHDVGMNLAR (221 aa). A c region spans residues 571 to 648; that stretch reads ILKAAGQQAP…MAMGGSAGTD (78 aa).

It belongs to the heat shock protein 90 family. Homodimer.

It localises to the cytoplasm. Its function is as follows. Molecular chaperone. Has ATPase activity. The sequence is that of Chaperone protein HtpG from Aromatoleum aromaticum (strain DSM 19018 / LMG 30748 / EbN1) (Azoarcus sp. (strain EbN1)).